The chain runs to 265 residues: Deoxycytidine kinase 2 (265 aa).

Gly31 to Thr39 is a binding site for ATP. Residues Glu56, Tyr89, and Gln100 each coordinate substrate. Glu130 serves as the catalytic Proton acceptor. Substrate is bound by residues Arg131 and Asp136. Arg191–Arg195 is a binding site for ATP. Residue Glu200 coordinates substrate. Glu243–Phe245 is a binding site for ATP.

The protein belongs to the DCK/DGK family. In terms of assembly, homodimer. As to expression, expressed at high levels in adult intestine, spleen, thymus and testis with lower levels in skeletal muscle and eye. In the embryo, expressed at higher levels until day 10 with lower levels in later stages.

Its subcellular location is the nucleus. The enzyme catalyses 2'-deoxycytidine + a ribonucleoside 5'-triphosphate = dCMP + a ribonucleoside 5'-diphosphate + H(+). It catalyses the reaction 2'-deoxyguanosine + ATP = dGMP + ADP + H(+). The catalysed reaction is 2'-deoxyadenosine + ATP = dAMP + ADP + H(+). Functionally, phosphorylates the deoxyribonucleosides deoxyadenosine, deoxycytidine and deoxyguanosine. Shows highest activity against deoxyguanosine followed by deoxycytidine and then deoxyadenosine. Shows only very minor activity against deoxyuridine and deoxythymidine. The protein is Deoxycytidine kinase 2 of Gallus gallus (Chicken).